We begin with the raw amino-acid sequence, 452 residues long: Pup--protein ligase (452 aa).

E9 contributes to the Mg(2+) binding site. R53 is a binding site for ATP. Mg(2+) is bound at residue Y55. Catalysis depends on D57, which acts as the Proton acceptor. Residue E63 participates in Mg(2+) binding. Positions 66 and 419 each coordinate ATP.

The protein belongs to the Pup ligase/Pup deamidase family. Pup-conjugating enzyme subfamily.

The enzyme catalyses ATP + [prokaryotic ubiquitin-like protein]-L-glutamate + [protein]-L-lysine = ADP + phosphate + N(6)-([prokaryotic ubiquitin-like protein]-gamma-L-glutamyl)-[protein]-L-lysine.. The protein operates within protein degradation; proteasomal Pup-dependent pathway. It participates in protein modification; protein pupylation. Its function is as follows. Catalyzes the covalent attachment of the prokaryotic ubiquitin-like protein modifier Pup to the proteasomal substrate proteins, thereby targeting them for proteasomal degradation. This tagging system is termed pupylation. The ligation reaction involves the side-chain carboxylate of the C-terminal glutamate of Pup and the side-chain amino group of a substrate lysine. This is Pup--protein ligase from Streptosporangium roseum (strain ATCC 12428 / DSM 43021 / JCM 3005 / KCTC 9067 / NCIMB 10171 / NRRL 2505 / NI 9100).